The chain runs to 423 residues: Dihydroorotase (423 aa).

Zn(2+) contacts are provided by H60 and H62. Residues H62–R64 and N94 contribute to the substrate site. Zn(2+) is bound by residues D152, H179, H232, and D305. D305 is an active-site residue. Substrate contacts are provided by residues H309 and P323–G324.

This sequence belongs to the metallo-dependent hydrolases superfamily. DHOase family. Class I DHOase subfamily. The cofactor is Zn(2+).

The catalysed reaction is (S)-dihydroorotate + H2O = N-carbamoyl-L-aspartate + H(+). It participates in pyrimidine metabolism; UMP biosynthesis via de novo pathway; (S)-dihydroorotate from bicarbonate: step 3/3. Its function is as follows. Catalyzes the reversible cyclization of carbamoyl aspartate to dihydroorotate. The polypeptide is Dihydroorotase (Sulfurihydrogenibium sp. (strain YO3AOP1)).